Reading from the N-terminus, the 656-residue chain is UvrABC system protein B (656 aa).

The region spanning 23 to 180 is the Helicase ATP-binding domain; it reads EGIKKGYRFQ…QHLAKIGYER (158 aa). Residue 36–43 coordinates ATP; the sequence is GVTGSGKT. Positions 89 to 112 match the Beta-hairpin motif; that stretch reads YYDYYQPEAYVPTKDLYIEKNADI. Residues 426–588 enclose the Helicase C-terminal domain; the sequence is QVDDLISEIK…ITPKTIVKPL (163 aa). One can recognise a UVR domain in the interval 614 to 649; it reads EEYLSLLEEEMYRAASELRYEDAAKLRDEIFRLREE.

Belongs to the UvrB family. In terms of assembly, forms a heterotetramer with UvrA during the search for lesions. Interacts with UvrC in an incision complex.

It localises to the cytoplasm. In terms of biological role, the UvrABC repair system catalyzes the recognition and processing of DNA lesions. A damage recognition complex composed of 2 UvrA and 2 UvrB subunits scans DNA for abnormalities. Upon binding of the UvrA(2)B(2) complex to a putative damaged site, the DNA wraps around one UvrB monomer. DNA wrap is dependent on ATP binding by UvrB and probably causes local melting of the DNA helix, facilitating insertion of UvrB beta-hairpin between the DNA strands. Then UvrB probes one DNA strand for the presence of a lesion. If a lesion is found the UvrA subunits dissociate and the UvrB-DNA preincision complex is formed. This complex is subsequently bound by UvrC and the second UvrB is released. If no lesion is found, the DNA wraps around the other UvrB subunit that will check the other stand for damage. This Pseudothermotoga lettingae (strain ATCC BAA-301 / DSM 14385 / NBRC 107922 / TMO) (Thermotoga lettingae) protein is UvrABC system protein B.